Here is a 106-residue protein sequence, read N- to C-terminus: Transcriptional and immune response regulator (106 aa).

As to quaternary structure, monomer. Interacts with NOTCH2 (via ANK repeats), the interaction inhibits the nuclear translocation of NOTCH2 N2ICD. Interacts (C-terminus) with CBY1 (C-terminus), TCIM competes with CTNNB1 for the interaction with CBY1.

It is found in the cytoplasm. The protein resides in the nucleus. It localises to the nucleolus. Its subcellular location is the nucleus speckle. Its function is as follows. Seems to be involved in the regulation of cell growth an differentiation, may play different and opposite roles depending on the tissue or cell type. May enhance the WNT-CTNNB1 pathway by relieving antagonistic activity of CBY1. Enhances the proliferation of follicular dendritic cells. Plays a role in the mitogen-activated MAPK2/3 signaling pathway, positively regulates G1-to-S-phase transition of the cell cycle. In endothelial cells, enhances key inflammatory mediators and inflammatory response through the modulation of NF-kappaB transcriptional regulatory activity. Involved in the regulation of heat shock response, seems to play a positive feedback with HSF1 to modulate heat-shock downstream gene expression. Plays a role in the regulation of hematopoiesis even if the mechanisms are unknown. In cancers such as thyroid or lung cancer, it has been described as promoter of cell proliferation, G1-to-S-phase transition and inhibitor of apoptosis. However, it negatively regulates self-renewal of liver cancer cells via suppresion of NOTCH2 signaling. The chain is Transcriptional and immune response regulator (TCIM) from Bos taurus (Bovine).